The chain runs to 917 residues: Intercellular adhesion molecule 5 (917 aa).

Positions 1-31 (MPGPSPGLRRALLGLWAALGLGILGISAVAL) are cleaved as a signal peptide. Topologically, residues 32 to 833 (EPFWADLQPR…RITVRVAGPW (802 aa)) are extracellular. 9 consecutive Ig-like C2-type domains span residues 48-130 (GGSL…PLPS), 135-235 (GENF…SLIA), 242-329 (DSER…LLTL), 337-402 (GKMV…SSEL), 408-486 (PRLD…VTLT), 491-567 (PALD…VAVT), 572-651 (PSFE…NRHG), 665-738 (PQMD…RTVT), and 745-828 (PVVA…ITVR). An N-linked (GlcNAc...) (high mannose) asparagine glycan is attached at N54. Disulfide bonds link C55-C99 and C59-C103. Residues N74 and N137 are each glycosylated (N-linked (GlcNAc...) asparagine). C142 and C198 are disulfide-bonded. T182 carries the post-translational modification Phosphothreonine. N-linked (GlcNAc...) asparagine glycosylation is found at N195, N214, N274, N316, N371, and N397. C249 and C302 are disulfide-bonded. C344 and C383 are joined by a disulfide. 3 disulfides stabilise this stretch: C415–C470, C498–C551, and C579–C644. Residues N582 and N645 are each glycosylated (N-linked (GlcNAc...) asparagine). A disulfide bond links C672 and C724. N-linked (GlcNAc...) asparagine glycosylation is found at N762, N793, and N794. An intrachain disulfide couples C767 to C812. A helical membrane pass occupies residues 834 to 854 (LWVAVGGAAGGAALLAAGAGL). Topologically, residues 855–917 (AFYVQSTACK…EVFAIQLTSS (63 aa)) are cytoplasmic. Residues 884 to 893 (GAGGTPGAEG) show a composition bias toward gly residues. The disordered stretch occupies residues 884 to 908 (GAGGTPGAEGGAETPGTAESPADGE).

This sequence belongs to the immunoglobulin superfamily. ICAM family. Glycosylation at Asn-54 is critical for functional folding. As to expression, expressed on neurons in the most rostral segment of the mammalian brain, the telencephalon.

Its subcellular location is the membrane. In terms of biological role, ICAM proteins are ligands for the leukocyte adhesion protein LFA-1 (integrin alpha-L/beta-2). The protein is Intercellular adhesion molecule 5 (Icam5) of Mus musculus (Mouse).